The sequence spans 432 residues: MSETHLSTQRFADLPLHAEVIQALNENGFEFCTPIQALSLPVLLKAKDIAGQAQTGTGKTMAFLVATFNHLLTTPAPQARELNQPRAIIMAPTRELAIQIAKDANLLAKHTGLKVGIVYGGESYEVQREVLDKGVDILIGTTGRIIDYVRQGVISLNSIQAVVLDEADRMFDLGFIKDIRFLFRRMPDASSRLNMLFSATLSMKVQELAYDHMNDPEKVEVTPEEKTSKNIKEEIFYPSTEDKMRLLLTLMEEDWPEKAIVFSNTKHSCENLWSWLEGDGHRVGLLTGDVPQKKRIRILEQFTSGDLDVLVATDVAARGLHISDVSHVYNYDLPDDCEDYVHRIGRTGRAGNKGVSVSFACETYALNLPAIEQYIGHSVPVSRYDREALLDDIPTPVKIHRKHPTSRTRDGAKGAHRSGGARPPRHRTRRPS.

A Q motif motif is present at residues 9 to 37 (QRFADLPLHAEVIQALNENGFEFCTPIQA). The 180-residue stretch at 40-219 (LPVLLKAKDI…YDHMNDPEKV (180 aa)) folds into the Helicase ATP-binding domain. 53-60 (AQTGTGKT) provides a ligand contact to ATP. A DEAD box motif is present at residues 165-168 (DEAD). One can recognise a Helicase C-terminal domain in the interval 243–390 (KMRLLLTLME…VSRYDREALL (148 aa)). The tract at residues 395–432 (TPVKIHRKHPTSRTRDGAKGAHRSGGARPPRHRTRRPS) is disordered. Basic residues predominate over residues 423–432 (PPRHRTRRPS).

It belongs to the DEAD box helicase family. RhlB subfamily. As to quaternary structure, component of the RNA degradosome, which is a multiprotein complex involved in RNA processing and mRNA degradation.

The protein resides in the cytoplasm. The catalysed reaction is ATP + H2O = ADP + phosphate + H(+). Its function is as follows. DEAD-box RNA helicase involved in RNA degradation. Has RNA-dependent ATPase activity and unwinds double-stranded RNA. The protein is ATP-dependent RNA helicase RhlB of Shewanella denitrificans (strain OS217 / ATCC BAA-1090 / DSM 15013).